We begin with the raw amino-acid sequence, 234 residues long: tRNA (guanine-N(1)-)-methyltransferase (234 aa).

S-adenosyl-L-methionine contacts are provided by residues glycine 112 and 132-137 (IGDFIL).

The protein belongs to the RNA methyltransferase TrmD family. Homodimer.

It is found in the cytoplasm. The enzyme catalyses guanosine(37) in tRNA + S-adenosyl-L-methionine = N(1)-methylguanosine(37) in tRNA + S-adenosyl-L-homocysteine + H(+). Specifically methylates guanosine-37 in various tRNAs. This is tRNA (guanine-N(1)-)-methyltransferase from Campylobacter jejuni (strain RM1221).